Reading from the N-terminus, the 292-residue chain is Elongation factor Ts (292 aa).

The interval 79-82 (TDFV) is involved in Mg(2+) ion dislocation from EF-Tu.

This sequence belongs to the EF-Ts family.

It localises to the cytoplasm. Functionally, associates with the EF-Tu.GDP complex and induces the exchange of GDP to GTP. It remains bound to the aminoacyl-tRNA.EF-Tu.GTP complex up to the GTP hydrolysis stage on the ribosome. The polypeptide is Elongation factor Ts (tsf) (Idiomarina loihiensis (strain ATCC BAA-735 / DSM 15497 / L2-TR)).